We begin with the raw amino-acid sequence, 235 residues long: Thiamine import ATP-binding protein ThiQ (235 aa).

The ABC transporter domain maps to 2-230 (LKLIDITWLY…QASASALLGI (229 aa)). 32-39 (GPSGAGKS) provides a ligand contact to ATP.

Belongs to the ABC transporter superfamily. Thiamine importer (TC 3.A.1.19.1) family. The complex is composed of two ATP-binding proteins (ThiQ), two transmembrane proteins (ThiP) and a solute-binding protein (ThiB).

The protein resides in the cell inner membrane. It catalyses the reaction thiamine(out) + ATP + H2O = thiamine(in) + ADP + phosphate + H(+). Its function is as follows. Part of the ABC transporter complex ThiBPQ involved in thiamine import. Responsible for energy coupling to the transport system. Is also involved in thiamine pyrophosphate (TPP) transport. This Salmonella typhimurium (strain LT2 / SGSC1412 / ATCC 700720) protein is Thiamine import ATP-binding protein ThiQ.